A 366-amino-acid polypeptide reads, in one-letter code: MGEQPIFSTRAHVFQIDPNTKKNWVPTSKHAVTVSYFYDSTRNVYRIISLDGSKAIINSTITPNMTFTKTSQKFGQWADSRANTVYGLGFSSEHHLSKFAEKFQEFKEAARLAKEKSQEKMELTSTPSQESAGGDLQSPLTPESINGTDDERTPDVTQNSEPRAEPAQNALPFSHSAGDRTQGLSHASSAISKHWEAELATLKGNNAKLTAALLESTANVKQWKQQLAAYQEEAERLHKRVTELECVSSQANAVHSHKTELSQTVQELEETLKVKEEEIERLKQEIDNARELQEQRDSLTQKLQEVEIRNKDLEGQLSELEQRLEKSQSEQDAFRSNLKTLLEILDGKIFELTELRDNLAKLLECS.

In terms of domain architecture, WH1 spans 1-110; the sequence is MGEQPIFSTR…EKFQEFKEAA (110 aa). Gly2 bears the N-acetylglycine mark. A disordered region spans residues 114–189; it reads KEKSQEKMEL…RTQGLSHASS (76 aa). The segment covering 138-147 has biased composition (polar residues); the sequence is SPLTPESING. Positions 193 to 364 form a coiled coil; that stretch reads KHWEAELATL…LRDNLAKLLE (172 aa). Positions 302–366 are required for tetramerization; it reads KLQEVEIRNK…DNLAKLLECS (65 aa). Ser318 carries the post-translational modification Phosphoserine.

Belongs to the Homer family. In terms of assembly, tetramer; this tetrameric structure is critical for forming the high-order complex with SHANK1, which in turn is necessary for the structural and functional integrity of dendritic spines. Interacts with GRM1, GRM5, ITPR1, DYN3, RYR1, RYR2 and SHANK3. Interacts with IFT57 and OPHN1. Isoform 1 and isoform 2 encode coiled-coil structures that mediate homo- and heteromultimerization. Interacts with SHANK1; forms high-order polymerized complex with a mesh-like network structure, at least composed of SHANK1, HOMER1 and DLGAP1; the complex formation is SHANK1 multimerization dependent. Interacts with NFATC4. Interacts with DAGLA (via PPXXF motif); this interaction is required for the cell membrane localization of DAGLA. Interacts with SRGAP2. Highly expressed in cortex, Purkinje cells of the cerebellum, hippocampus, striatum and olfactory bulb. Isoform 1 and isoform 3 are expressed in skeletal and cardiac muscle.

Its subcellular location is the cytoplasm. It is found in the postsynaptic density. It localises to the synapse. The protein localises to the cell projection. The protein resides in the dendritic spine. In terms of biological role, postsynaptic density scaffolding protein. Binds and cross-links cytoplasmic regions of GRM1, GRM5, ITPR1, DNM3, RYR1, RYR2, SHANK1 and SHANK3. By physically linking GRM1 and GRM5 with ER-associated ITPR1 receptors, it aids the coupling of surface receptors to intracellular calcium release. May also couple GRM1 to PI3 kinase through its interaction with AGAP2. Differentially regulates the functions of the calcium activated channel ryanodine receptors RYR1 and RYR2. Isoform 1 decreases the activity of RYR2, and increases the activity of RYR1, whereas isoform 3 counteracts the effects by competing for binding sites. Isoform 1 regulates the trafficking and surface expression of GRM5. Isoform 3 acts as a natural dominant negative, in dynamic competition with constitutively expressed isoform 1, and isoform 2 to regulate synaptic metabotropic glutamate function. Isoform 3, may be involved in the structural changes that occur at synapses during long-lasting neuronal plasticity and development. Forms a high-order complex with SHANK1, which in turn is necessary for the structural and functional integrity of dendritic spines. Negatively regulates T cell activation by inhibiting the calcineurin-NFAT pathway. Acts by competing with calcineurin/PPP3CA for NFAT protein binding, hence preventing NFAT activation by PPP3CA. This chain is Homer protein homolog 1, found in Rattus norvegicus (Rat).